The following is a 194-amino-acid chain: Large ribosomal subunit protein uL24c (194 aa).

The transit peptide at 1–50 (MVAMAMASLQSSMSSLSLSSNSFLGQPLSPITLSPFLQGKPTEKKCLIVM) directs the protein to the chloroplast.

It belongs to the universal ribosomal protein uL24 family. As to quaternary structure, part of the 50S ribosomal subunit.

It localises to the plastid. Its subcellular location is the chloroplast. In terms of biological role, one of two assembly initiator proteins, it binds directly to the 5'-end of the 23S rRNA, where it nucleates assembly of the 50S subunit. The chain is Large ribosomal subunit protein uL24c (RPL24) from Pisum sativum (Garden pea).